The sequence spans 4700 residues: MANVQVAVRVRPLSKRETKEGGRIIVEVDGKVAKIRNLKVDNRPDGFGDSREKVMAFGFDYCYWSVNPEDPQYASQDVVFQDLGMEVLSGVAKGYNICLFAYGQTGSGKTYTMLGTPASVGLTPRICEGLFVREKDCASLPSSCRIKVSFLEIYNERVRDLLKQSGQKKSYTLRVREHPEMGPYVQGLSQHVVTNYKQVIQLLEEGIANRITAATHVHEASSRSHAIFTIHYTQAILENNLPSEMASKINLVDLAGSERADPSYCKDRIAEGANINKSLVTLGIVISTLAQNSQVFSSCQSLNSSVSNGGDSGILSSPSGTSSGGAPSRRQSYIPYRDSVLTWLLKDSLGGNSKTIMVATVSPAHTSYSETMSTLRYASSAKNIINKPRVNEDANLKLIRELREEIERLKALLLSFELRNFSSLSDENLKELVLQNELKIDQLTKDWTQKWNDWQALMEHYSVDINRRRAGVVIDSSLPHLMALEDDVLSTGVVLYHLKEGTTKIGRIDSDQEQDIVLQGQWIERDHCTITSACGVVVLRPARGARCTVNGREVTASCRLTQGAVITLGKAQKFRFNHPAEAAVLRQRRQVGEAAAGRGSLEWLDLDGDLAASRLGLSPLLWKERRALEEQCDEDHQTPRDGETSHRAQIQQQQSYVEDLRHQILAEEIRAAKELEFDQAWISQQIKENQQCLLREETWLASLQQQQQEDQVAEKELEASVALDAWLQTDPEIQPSPFVQSQKRVVHLQLLRRHTLRAAERNVRRKKVSFQLERIIKKQRLLEAQKRLEKLTTLCWLQDDSTQEPPYQVLSPDATVPRPPCRSKLTSCSSLSPQRLCSKHMPQLHSIFLSWDPSTTLPPRPDPTHQTSEKTSSEEHLPQAASYPARTGCLRKNGLHSSGHGQPCTARAALARKGASAPDACLTMSPNSVGIQEMEMGVKQPHQMVSQGLASLRKSANKLKPRHEPKIFTSTTQTRGAKGLADPSHTQAGWRKEGNLGTHKAAKGASCNSLYPHGPRQTAGHGKAVKTFWTEYKPPSPSRASKRHQRVLATRVRNITKKSSHLPLGSPLKRQQNTRDPDTMVPLTDFSPVMDHSREKDNDLSDTDSNYSLDSLSCVYAKALIEPLKPEERKWDFPEPENSESDDSQLSEDSLAEKRYQSPKNRLGGNRPTNNRGQPRTRTRASVRGFTAASDSDLLAQTHRSFSLDSLIDAEEELGEDQQEEPFPGSADEIPTETFWHLEDSSLPVMDQEAICRLGPINYRTAARLDAVLPMSSSFYLDPQFQPHCELQPHCELQPHCELQPHCEQAESQVEPSYSEQADSLQGMQLSRESPLMSMDSWFSCDSKINPSSPPGIVGSLCPSPDMQEFHSCKGERPGYWPNTEELKPSDAETVLPYSSKLHQGSTELLCSARDEHTASAADTSRLSLWGIQRLIQPGADGTFQGRCIPDMTQQGSSEASHNSSVSNVLAASATTLTHVGSTHERDWSALQQKYLLELSCPVLEAIGAPKPAYPYLEEDSGSLAQASSKGGDTLLPVGPRVSSNLNLNNFPVHLSRIRRLRAEKEQDSLNAKLEGVSDFFSTSEKEASYDETYSADLESLSASRSTNAQVFATENAIPDSMTEACEVKQNNLEECLQSCRKPGLMTSSDEDFFQKNACHSNVTTATKADHWSQGWAPLRKNSAVQPGQLSPDSHYPLEEEKTDCQESSKEAVRRHINVSFALPSGPELYLHSAPWNPLSSSLQPPLLETFYVTKSRDALTETALEIPACREVRVPSPPPREAWGFGHNHQALQGAYLKNNLPVLLQNQNSKIASSQQVTAEIPVDLNTREVIRESGKCPGNITEESHDSVYSSVTQNRHFLPSTSTKVCEFENQVVILNKKHSFPALEGGEVTAQSCCGASSDSTESGKSLLFRESEAREEEELDQNTVLRQTINVSLEKDMPGESAVSLKSRSVDRRVSSPVMVAQGGGPTPKWEGKNETGLLEKGLRPKDSSEEFKLPGTKPAYERFQLVACPQERNPSECKSQEMLNPNREPSGKKQNKRVNNTDEMARLIRSVMQLENGILEIESKQNKQVHASHTPGTDKELVFQDQKEQEKTDHAFRPDSSGNPLPSKDQPSSPRQTDDTVFRDSEAGAMEVNSIGNHPQVQKITPNPFRSREGVRESEPVREHTHPAGSDRPARDICDSLGKHTTCREFTNTSLHPQRMKALARALPLQPRLERSSKNNGQFVKASASLKGQPWGLGSLEELETVKGFQESQVAEHVSSSNQEEPKAQGKVEEMPMQRGGSLQEENKVTQKFPSLSQLCRDTFFRQETVSPLLSRTEFCTAPLHQDLSNTLPLNSPRWPRRCLHVPVALGISSLDCVLDLTMLKIHNSPLVTGVEHQDQSTETRSHSPEGNVRGRSSEAHTAWCGSVRSMAMGSHSQSGVPESIPLGTEDRISASTSPQDHGKDLRITLLGFSTSEDFASEAEVAVQKEIRVSSLNKVSSQPEKRVSFSLEEDSDQASKPRQKAEKETEDVGLTSGVSLAPVSLPRVPSPEPRLLEPSDHASMCLAILEEIRQAKAQRKQLHDFVARGTVLSYCETLLEPECSSRVAGRPQCKQIDQSSSDQTRNEGEAPGFHVASLSAEAGQIDLLPDERKVQATSLSADSFESLPNTETDREPWDPVQAFSHAAPAQDRKRRTGELRQFAGASEPFICHSSSSEIIEKKKDATRTPSSADPLAPDSPRSSAPVEEVRRVVSKKVVAALPSQAPYDDPRVTLHELSQSVPQETAEGIPPGSQDSSPEHQEPRTLDTTYGEVSDNLLVTAQGEKTAHFESQSVTCDVQNSTSASGPKQDHVQCPEASTGFEEGRASPKQDTILPGALTRVALEAPTQQCVQCKESVGSGLTEVCRAGSKHSRPIPLPDQRPSANPGGIGEEAPCRHPREALDGPVFSRNPEGSRTLSPSRGKESRTLPCRQPCSSQPVATHAYSSHSSTLLCFRDGDLGKEPFKAAPHTIHPPCVVPSRAYEMDETGEISRGPDVHLTHGLEPKDVNREFRLTESSTCEPSTVAAVLSRAQGCRSPSAPDVRTGSFSHSATDGSVGLIGVPEKKVAEKQASTELEAASFPAGMYSEPLRQFRDSSVGDQNAQVCQTNPEPPATTQGPHTLDLSEGSAESKLVVEPQHECLENTTRCFLEKPQFSTELRDHNRLDSQAKFVARLKHTCSPQEDSPWQEEEQHRDQASGGGEGFAQGVNPLPDEDGLDGCQILDAGREEVAVAKPPVSKILSQGFKDPATVSLRQNETPQPAAQRSGHLYTGREQPAPNHRGSLPVTTIFSGPKHSRSSPTPQFSVVGSSRSLQELNLSVEPPSPTDEDTQGPNRLWNPHLRGYSSGKSVARTSLQAEDSNQKASSRLDDGTTDHRHLKPATPPYPMPSTLSHMPTPDFTTSWMSGTLEQAQQGKREKLGVQVRPENWCSQMDKGMLHFGSSDISPYALPWRPEEPARISWKQYMSGSAVDVSCSQKPQGLTLSNVARCSSMDNGLEDQNSPFHSHLSTYANICDLSTTHSSTENAQGSNEAWEVFRGSSSIALGDPHIPTSPEGVAPTSGHDRRPQFRGPSGEADCLRSKPPLAKGSAAGPVDEIMLLYPSEAGCPVGQTRTNTFEQGTQTLGSRRHWSSTDISFAQPEASAVSAFDLASWTSMHNLSLHLSQLLHSTSELLGSLSQPDVARREQNTKRDIPDKAPQALMMDGSTQTTVDEGSQTDLTLPTLCLQTSEAEPQGANVILEGLGSDTSTVSQEEGDVPGVPQKREAEETAQKMAQLLYLQEESTPYKPQSPSIPSSHLRFQKAPVGQHLPSVSPSVSDAFLPPSSQPEESYCLVVSSPSPSSPHSPGLFPSTSEYPGDSRVQKKLGPTSALFVDRASSPILTLSASTQEPGLSPGSLTLSAPSTHPVEGHQKLDSSPDPVDAPRTPMDNYSQTTDELGGSQRGRSSLQRSNGRSFLELHSPHSPQQSPKLQFSFLGQHPQQLQPRTTIGVQSRLLPPPLRHRSQRLGNSFVPEKVASPEHCPLSGREPSQWQSRTENGGESSASPGEPQRTLDRPSSWGGLQHLSPCPVSELTDTAGLRGSALGLPQACQPEELLCFSCQMCMAPEHQHHSLRDLPVHNKFSNWCGVQKGSPGGLDMTEEELGASGDLSSEKQEQSPPQPPNDHSQDSEWSKREQIPLQVGAQNLSLSVELTEAKLHHGFGEADALLQVLQSGTGEALAADEPVTSTWKELYARQKKAIETLRRERAERLGNFCRTRSLSPQKQLSLLPNKDLFIWDLDLPSRRREYLQQLRKDVVETTRSPESVSRSAHTPSDIELMLQDYQQAHEEAKVEIARARDQLRERTEQEKLRIHQKIISQLLKEEDKLHTLANSSSLCTSSNGSLSSGMTSGYNSSPALSGQLQFPENMGHTNLPDSRDVWIGDERGGHSAVRKNSAYSHRASLGSCCCSPSSLSSLGTCFSSSYQDLAKHVVDTSMADVMAACSDNLHNLFSCQATAGWNYQGEEQAVQLYYKVFSPTRHGFLGAGVVSQPLSRVWAAVSDPTVWPLYYKPIQTARLHQRVTNSISLVYLVCNTTLCALKQPRDFCCVCVEAKEGHLSVMAAQSVYDTSMPRPSRKMVRGEILPSAWILQPITVEGKEVTRVIYLAQVELGAPGFPPQLLSSFIKRQPLVIARLASFLGR.

In terms of domain architecture, Kinesin motor spans 3–384 (NVQVAVRVRP…LRYASSAKNI (382 aa)). Residue 103-110 (GQTGSGKT) coordinates ATP. Positions 310–328 (GDSGILSSPSGTSSGGAPS) are enriched in low complexity. The interval 310–331 (GDSGILSSPSGTSSGGAPSRRQ) is disordered. The FHA domain maps to 498-569 (LKEGTTKIGR…LTQGAVITLG (72 aa)). Composition is skewed to basic and acidic residues over residues 631–646 (QCDE…ETSH) and 867–877 (TSEKTSSEEHL). Disordered regions lie at residues 631-652 (QCDE…QIQQ), 851-880 (WDPS…LPQA), 1057-1104 (KKSS…SDTD), and 1128-1188 (ERKW…GFTA). Residues 1134–1146 (PEPENSESDDSQL) are compositionally biased toward acidic residues. The residue at position 1203 (Ser1203) is a Phosphoserine. 22 disordered regions span residues 1939 to 1976 (MPGE…EGKN), 2014 to 2043 (ERNP…RVNN), 2088 to 2179 (DQKE…PARD), 2254 to 2290 (ESQV…QEEN), 2377 to 2403 (GVEH…SSEA), 2416 to 2444 (MGSH…SPQD), 2479 to 2539 (LNKV…PRLL), 2589 to 2613 (RVAG…EGEA), 2642 to 2678 (LSAD…RKRR), 2696 to 2731 (SSSS…PVEE), 2765 to 2789 (PQET…PRTL), 2821 to 2852 (VQNS…ASPK), 2892 to 2955 (SKHS…PCRQ), 3124 to 3144 (NAQV…PHTL), 3199 to 3241 (HTCS…GLDG), 3274 to 3412 (SLRQ…MPST), 3564 to 3611 (IALG…KGSA), 3766 to 3790 (SDTS…AEET), 3830 to 3884 (LPSV…RVQK), 3906 to 3991 (ASTQ…SPKL), 4033 to 4086 (PEKV…QHLS), and 4153 to 4193 (PGGL…EWSK). The segment covering 2088–2100 (DQKEQEKTDHAFR) has biased composition (basic and acidic residues). Residues 2103 to 2118 (SSGNPLPSKDQPSSPR) are compositionally biased toward polar residues. Over residues 2119–2129 (QTDDTVFRDSE) the composition is skewed to basic and acidic residues. Polar residues predominate over residues 2137–2148 (SIGNHPQVQKIT). The span at 2153–2169 (RSREGVRESEPVREHTH) shows a compositional bias: basic and acidic residues. Polar residues predominate over residues 2254–2266 (ESQVAEHVSSSNQ). Composition is skewed to basic and acidic residues over residues 2267–2279 (EEPK…EEMP) and 2379–2391 (EHQD…RSHS). A compositionally biased stretch (basic and acidic residues) spans 2500–2510 (QASKPRQKAEK). The segment covering 2642–2653 (LSADSFESLPNT) has biased composition (polar residues). Positions 2712-2729 (PSSADPLAPDSPRSSAPV) are enriched in low complexity. Positions 2916-2925 (APCRHPREAL) are enriched in basic and acidic residues. The segment covering 3124–3141 (NAQVCQTNPEPPATTQGP) has biased composition (polar residues). Composition is skewed to polar residues over residues 3274-3285 (SLRQNETPQPAA), 3320-3339 (SSPT…QELN), and 3368-3387 (SGKS…QKAS). Basic and acidic residues predominate over residues 3388 to 3397 (SRLDDGTTDH). Over residues 3857-3872 (SSPSPSSPHSPGLFPS) the composition is skewed to low complexity. Positions 3906–3924 (ASTQEPGLSPGSLTLSAPS) are enriched in polar residues. Residues 3958 to 3975 (LGGSQRGRSSLQRSNGRS) show a composition bias toward low complexity. Polar residues predominate over residues 4048 to 4065 (EPSQWQSRTENGGESSAS). The stretch at 4334-4387 (SDIELMLQDYQQAHEEAKVEIARARDQLRERTEQEKLRIHQKIISQLLKEEDKL) forms a coiled coil. A compositionally biased stretch (low complexity) spans 4397–4411 (CTSSNGSLSSGMTSG). Residues 4397 to 4419 (CTSSNGSLSSGMTSGYNSSPALS) are disordered. In terms of domain architecture, START spans 4483 to 4700 (SYQDLAKHVV…IARLASFLGR (218 aa)).

Belongs to the TRAFAC class myosin-kinesin ATPase superfamily. Kinesin family. As to quaternary structure, interacts with ATAD3A. As to expression, expressed in the central nervous system, muscle cells (heart and skeletal muscle), pancreas, prostate and lung.

It is found in the cytoplasm. It localises to the cytoskeleton. The protein resides in the microtubule organizing center. Its subcellular location is the centrosome. The protein localises to the centriole. It is found in the nucleus. Functionally, microtubule-dependent motor protein required for spindle pole assembly during mitosis. Required to stabilize the pericentriolar material (PCM). This chain is StAR-related lipid transfer protein 9 (STARD9), found in Homo sapiens (Human).